The chain runs to 333 residues: Large ribosomal subunit protein mL39 (333 aa).

One can recognise a TGS domain in the interval 56-122; the sequence is DKIEVRYLGL…QESCTLQLLN (67 aa). The tract at residues 311–333 is disordered; that stretch reads SKKPSPARLPNEPFEEQQQLQLS.

It belongs to the mitochondrion-specific ribosomal protein mL39 family. Component of the mitochondrial ribosome large subunit (39S) which comprises a 16S rRNA and about 50 distinct proteins.

It localises to the mitochondrion. The chain is Large ribosomal subunit protein mL39 (mRpL39) from Drosophila melanogaster (Fruit fly).